Consider the following 89-residue polypeptide: Co-chaperonin GroES (89 aa).

The protein belongs to the GroES chaperonin family. As to quaternary structure, heptamer of 7 subunits arranged in a ring. Interacts with the chaperonin GroEL.

Its subcellular location is the cytoplasm. In terms of biological role, together with the chaperonin GroEL, plays an essential role in assisting protein folding. The GroEL-GroES system forms a nano-cage that allows encapsulation of the non-native substrate proteins and provides a physical environment optimized to promote and accelerate protein folding. GroES binds to the apical surface of the GroEL ring, thereby capping the opening of the GroEL channel. In Petrotoga mobilis (strain DSM 10674 / SJ95), this protein is Co-chaperonin GroES.